A 625-amino-acid polypeptide reads, in one-letter code: tRNA uridine 5-carboxymethylaminomethyl modification enzyme MnmG (625 aa).

FAD contacts are provided by residues 9–14 (GGGHAG), Val-121, and Ser-176. An NAD(+)-binding site is contributed by 270–284 (GPRYCPSIEDKIYRF). Residue Gln-367 participates in FAD binding.

Belongs to the MnmG family. Homodimer. Heterotetramer of two MnmE and two MnmG subunits. It depends on FAD as a cofactor.

The protein resides in the cytoplasm. NAD-binding protein involved in the addition of a carboxymethylaminomethyl (cmnm) group at the wobble position (U34) of certain tRNAs, forming tRNA-cmnm(5)s(2)U34. In Nitratiruptor sp. (strain SB155-2), this protein is tRNA uridine 5-carboxymethylaminomethyl modification enzyme MnmG.